Reading from the N-terminus, the 132-residue chain is MDTAYPREDTRAPTPSKAGAHTALTLGAPHPPPRDHLIWSVFSTLYLNLCCLGFLALAYSIKARDQKVVGDLEAARRFGSKAKCYNILAAMWTLVPPLLLLGLVVTGALHLARLAKDSAAFFSTKFDDADYD.

Basic and acidic residues predominate over residues 1-11; it reads MDTAYPREDTR. Positions 1–21 are disordered; that stretch reads MDTAYPREDTRAPTPSKAGAH. The Extracellular segment spans residues 1–36; it reads MDTAYPREDTRAPTPSKAGAHTALTLGAPHPPPRDH. A helical transmembrane segment spans residues 37–57; the sequence is LIWSVFSTLYLNLCCLGFLAL. Residues C50, C51, and C84 are each lipidated (S-palmitoyl cysteine). Residues 58–86 are Cytoplasmic-facing; that stretch reads AYSIKARDQKVVGDLEAARRFGSKAKCYN. A helical membrane pass occupies residues 87-107; it reads ILAAMWTLVPPLLLLGLVVTG. The Extracellular portion of the chain corresponds to 108–132; that stretch reads ALHLARLAKDSAAFFSTKFDDADYD.

The protein belongs to the CD225/Dispanin family. In terms of assembly, interacts with FKBP11. Post-translationally, palmitoylated. In terms of tissue distribution, detected in osteoblasts and fibroblasts (at protein level). Detected in bone.

Its subcellular location is the cell membrane. Functionally, required for normal bone mineralization. This Homo sapiens (Human) protein is Interferon-induced transmembrane protein 5 (IFITM5).